Reading from the N-terminus, the 210-residue chain is Large ribosomal subunit protein uL4 (210 aa).

Polar residues predominate over residues 41–51 (ANARQGTQSTK). Disordered stretches follow at residues 41 to 60 (ANARQGTQSTKTRGEVQGSS) and 67 to 98 (KGTGNARMGTNRSPVRRHGGVAFGPRPRDFSK).

This sequence belongs to the universal ribosomal protein uL4 family. In terms of assembly, part of the 50S ribosomal subunit.

One of the primary rRNA binding proteins, this protein initially binds near the 5'-end of the 23S rRNA. It is important during the early stages of 50S assembly. It makes multiple contacts with different domains of the 23S rRNA in the assembled 50S subunit and ribosome. Its function is as follows. Forms part of the polypeptide exit tunnel. The chain is Large ribosomal subunit protein uL4 from Dehalococcoides mccartyi (strain ATCC BAA-2100 / JCM 16839 / KCTC 5957 / BAV1).